The chain runs to 851 residues: DNA mismatch repair protein MutS (851 aa).

Position 614–621 (614–621 (GPNMGGKS)) interacts with ATP.

It belongs to the DNA mismatch repair MutS family.

This protein is involved in the repair of mismatches in DNA. It is possible that it carries out the mismatch recognition step. This protein has a weak ATPase activity. The protein is DNA mismatch repair protein MutS of Yersinia pestis.